We begin with the raw amino-acid sequence, 48 residues long: Piguamerin (48 aa).

Intrachain disulfides connect C3–C14, C8–C19, C21–C41, C26–C45, and C30–C47. The Antistasin-like domain maps to 19 to 47 (CVCVIGQCRKYCPNGFKKDENGCTFPCTC).

The protein belongs to the protease inhibitor I15 (antistasin) family.

Its subcellular location is the secreted. Its function is as follows. Inhibits plasma and tissue kallikrein, and trypsin. May be involved in leech hematophagia. The chain is Piguamerin from Hirudo nipponia (Korean blood-sucking leech).